We begin with the raw amino-acid sequence, 486 residues long: UDP-N-acetylmuramoyl-L-alanyl-D-glutamate--2,6-diaminopimelate ligase (486 aa).

Serine 31 lines the UDP-N-acetyl-alpha-D-muramoyl-L-alanyl-D-glutamate pocket. 109–115 (GTNGKTT) lines the ATP pocket. UDP-N-acetyl-alpha-D-muramoyl-L-alanyl-D-glutamate contacts are provided by residues asparagine 150, 151 to 152 (TT), serine 178, and arginine 186. Lysine 218 bears the N6-carboxylysine mark. Meso-2,6-diaminopimelate-binding positions include arginine 381, 405 to 408 (DNPR), glycine 455, and glutamate 459. The Meso-diaminopimelate recognition motif signature appears at 405–408 (DNPR).

The protein belongs to the MurCDEF family. MurE subfamily. Mg(2+) is required as a cofactor. Carboxylation is probably crucial for Mg(2+) binding and, consequently, for the gamma-phosphate positioning of ATP.

It localises to the cytoplasm. It catalyses the reaction UDP-N-acetyl-alpha-D-muramoyl-L-alanyl-D-glutamate + meso-2,6-diaminopimelate + ATP = UDP-N-acetyl-alpha-D-muramoyl-L-alanyl-gamma-D-glutamyl-meso-2,6-diaminopimelate + ADP + phosphate + H(+). The protein operates within cell wall biogenesis; peptidoglycan biosynthesis. In terms of biological role, catalyzes the addition of meso-diaminopimelic acid to the nucleotide precursor UDP-N-acetylmuramoyl-L-alanyl-D-glutamate (UMAG) in the biosynthesis of bacterial cell-wall peptidoglycan. The sequence is that of UDP-N-acetylmuramoyl-L-alanyl-D-glutamate--2,6-diaminopimelate ligase from Halalkalibacterium halodurans (strain ATCC BAA-125 / DSM 18197 / FERM 7344 / JCM 9153 / C-125) (Bacillus halodurans).